A 555-amino-acid chain; its full sequence is Solute carrier family 22 member 2 (555 aa).

Residues 1 to 22 (MPTTVDDVLEHGGEFHFFQKQM) lie on the Cytoplasmic side of the membrane. A helical transmembrane segment spans residues 23 to 43 (FFLLALLSATFAPIYVGIVFL). Over 44–150 (GFTPDHRCRS…LVCANSWMLD (107 aa)) the chain is Extracellular. An N-linked (GlcNAc...) asparagine glycan is attached at Asn72. A helical membrane pass occupies residues 151-171 (LFQSSVNVGFFIGSMSIGYIA). The Cytoplasmic portion of the chain corresponds to 172–177 (DRFGRK). Residues 178-198 (LCLLTTVLINAAAGVLMAISP) traverse the membrane as a helical segment. Residues 199-208 (TYTWMLIFRL) are Extracellular-facing. The chain crosses the membrane as a helical span at residues 209 to 229 (IQGLVSKAGWLIGYILITEFV). The Cytoplasmic portion of the chain corresponds to 230–238 (GRRYRRTVG). A helical membrane pass occupies residues 239–259 (IFYQVAYTVGLLVLAGVAYAL). Residues 260–263 (PHWR) are Extracellular-facing. The helical transmembrane segment at 264 to 284 (WLQFTVSLPNFFFLLYYWCIP) threads the bilayer. The Proline-rich sequence motif lies at 284–288 (PESPR). The Cytoplasmic portion of the chain corresponds to 285 to 348 (ESPRWLISQN…VRTPQIRKHT (64 aa)). Residues 349-369 (MILMYNWFTSSVLYQGLIMHM) traverse the membrane as a helical segment. Residues 370–375 (GLAGDN) are Extracellular-facing. The helical transmembrane segment at 376–396 (IYLDFFYSALVEFPAAFMIIL) threads the bilayer. Topologically, residues 397 to 414 (TIDRIGRRYPWAASNMVA) are cytoplasmic. Residues 415–435 (GAACLASVFIPGDLQWLKIII) traverse the membrane as a helical segment. The Extracellular segment spans residues 436–441 (SCLGRM). A helical transmembrane segment spans residues 442–462 (GITMAYEIVCLVNAELYPTFI). Residues 463-464 (RN) lie on the Cytoplasmic side of the membrane. Residues 465-485 (LGVHICSSMCDIGGIITPFLV) form a helical membrane-spanning segment. Topologically, residues 486–494 (YRLTNIWLE) are extracellular. Residues 495-515 (LPLMVFGVLGLVAGGLVLLLP) traverse the membrane as a helical segment. The Cytoplasmic portion of the chain corresponds to 516–555 (ETKGKALPETIEEAENMQRPRKNKEKMIYLQVQKLDIPLN).

The protein belongs to the major facilitator (TC 2.A.1) superfamily. Organic cation transporter (TC 2.A.1.19) family. Post-translationally, tyrosine phosphorylated by tyrosine-protein kinase YES1. Mainly expressed in kidney, in the cortex and medulla. Localized in testis, mostly to peritubular myoid cells and Leydig cells and also detected along the basal membrane of Sertoli cells. Expressed in brain, in neurons of the cerebral cortex and in various subcortical nuclei. In the brain, also detected in the dopaminergic regions of the substantia nigra. Expressed in tracheal and bronchial ciliated epithelium in the respiratory tract. Also detected in secretory phase endometrium, in scattered stromal cells. Expressed in spleen, placenta, small intestine and spinal cord. Weakly expressed in prostate, uterus and lung. In terms of tissue distribution, mainly expressed in kidney, bone marrow and testis. Expressed in colon, skeletal muscle, spinal cord, placenta and liver.

It is found in the basolateral cell membrane. It localises to the basal cell membrane. The protein resides in the apical cell membrane. It carries out the reaction (R)-noradrenaline(out) = (R)-noradrenaline(in). The catalysed reaction is (R)-adrenaline(out) = (R)-adrenaline(in). The enzyme catalyses serotonin(out) = serotonin(in). It catalyses the reaction dopamine(out) = dopamine(in). It carries out the reaction histamine(out) = histamine(in). The catalysed reaction is thiamine(in) = thiamine(out). The enzyme catalyses creatinine(in) = creatinine(out). It catalyses the reaction 1-methylnicotinamide(out) = 1-methylnicotinamide(in). It carries out the reaction guanidine(out) = guanidine(in). The catalysed reaction is choline(out) = choline(in). The enzyme catalyses agmatine(out) = agmatine(in). It catalyses the reaction putrescine(out) = putrescine(in). It carries out the reaction spermidine(in) = spermidine(out). The catalysed reaction is tyramine(in) = tyramine(out). The enzyme catalyses L-histidyl-L-proline diketopiperazine(in) = L-histidyl-L-proline diketopiperazine(out). It catalyses the reaction (R)-salsolinol(in) = (R)-salsolinol(out). It carries out the reaction N-methyl-(R)-salsolinol(in) = N-methyl-(R)-salsolinol(out). The catalysed reaction is acetylcholine(in) = acetylcholine(out). The enzyme catalyses prostaglandin F2alpha(out) = prostaglandin F2alpha(in). It catalyses the reaction prostaglandin E2(out) = prostaglandin E2(in). Its activity is regulated as follows. Tyrosine phosphorylation of the transporter leads to activation of the transport activity. TEA uptake is activated by tyrosine phosphorylation. Inhibited by cGMP, most likely through a cGMP-binding protein that interacts with OCT2. Functionally, electrogenic voltage-dependent transporter that mediates the transport of a variety of organic cations such as endogenous bioactive amines, cationic drugs and xenobiotics. Functions as a Na(+)-independent, bidirectional uniporter. Cation cellular uptake or release is driven by the electrochemical potential, i.e. membrane potential and concentration gradient. However, may also engage electroneutral cation exchange when saturating concentrations of cation substrates are reached. Predominantly expressed at the basolateral membrane of hepatocytes and proximal tubules and involved in the uptake and disposition of cationic compounds by hepatic and renal clearance from the blood flow. Implicated in monoamine neurotransmitters uptake such as histamine, dopamine, adrenaline/epinephrine, noradrenaline/norepinephrine, serotonin and tyramine, thereby supporting a physiological role in the central nervous system by regulating interstitial concentrations of neurotransmitters. Also capable of transporting dopaminergic neuromodulators cyclo(his-pro), salsolinol and N-methyl-salsolinol, thereby involved in the maintenance of dopaminergic cell integrity in the central nervous system. Mediates the bidirectional transport of acetylcholine (ACh) at the apical membrane of ciliated cell in airway epithelium, thereby playing a role in luminal release of ACh from bronchial epithelium. Also transports guanidine and endogenous monoamines such as vitamin B1/thiamine, creatinine and N-1-methylnicotinamide (NMN). Mediates the uptake and efflux of quaternary ammonium compound choline. Mediates the bidirectional transport of polyamine agmatine and the uptake of polyamines putrescine and spermidine. Able to transport non-amine endogenous compounds such as prostaglandin E2 (PGE2) and prostaglandin F2-alpha (PGF2-alpha). Also involved in the uptake of xenobiotic 4-(4-(dimethylamino)styryl)-N-methylpyridinium (ASP). May contribute to regulate the transport of organic compounds in testis across the blood-testis-barrier. In terms of biological role, in contrast with isoform 1, not able to transport guanidine, creatinine, cimetidine and metformin. This Homo sapiens (Human) protein is Solute carrier family 22 member 2.